A 174-amino-acid chain; its full sequence is Crossover junction endodeoxyribonuclease RuvC (174 aa).

Active-site residues include Asp8, Glu67, and Asp139. The Mg(2+) site is built by Asp8, Glu67, and Asp139.

This sequence belongs to the RuvC family. In terms of assembly, homodimer which binds Holliday junction (HJ) DNA. The HJ becomes 2-fold symmetrical on binding to RuvC with unstacked arms; it has a different conformation from HJ DNA in complex with RuvA. In the full resolvosome a probable DNA-RuvA(4)-RuvB(12)-RuvC(2) complex forms which resolves the HJ. Mg(2+) is required as a cofactor.

The protein localises to the cytoplasm. The enzyme catalyses Endonucleolytic cleavage at a junction such as a reciprocal single-stranded crossover between two homologous DNA duplexes (Holliday junction).. The RuvA-RuvB-RuvC complex processes Holliday junction (HJ) DNA during genetic recombination and DNA repair. Endonuclease that resolves HJ intermediates. Cleaves cruciform DNA by making single-stranded nicks across the HJ at symmetrical positions within the homologous arms, yielding a 5'-phosphate and a 3'-hydroxyl group; requires a central core of homology in the junction. The consensus cleavage sequence is 5'-(A/T)TT(C/G)-3'. Cleavage occurs on the 3'-side of the TT dinucleotide at the point of strand exchange. HJ branch migration catalyzed by RuvA-RuvB allows RuvC to scan DNA until it finds its consensus sequence, where it cleaves and resolves the cruciform DNA. The protein is Crossover junction endodeoxyribonuclease RuvC of Pseudoalteromonas translucida (strain TAC 125).